Reading from the N-terminus, the 406-residue chain is Tryptophan synthase beta chain (406 aa).

Lys-99 bears the N6-(pyridoxal phosphate)lysine mark.

It belongs to the TrpB family. Tetramer of two alpha and two beta chains. Pyridoxal 5'-phosphate is required as a cofactor.

The enzyme catalyses (1S,2R)-1-C-(indol-3-yl)glycerol 3-phosphate + L-serine = D-glyceraldehyde 3-phosphate + L-tryptophan + H2O. The protein operates within amino-acid biosynthesis; L-tryptophan biosynthesis; L-tryptophan from chorismate: step 5/5. In terms of biological role, the beta subunit is responsible for the synthesis of L-tryptophan from indole and L-serine. The sequence is that of Tryptophan synthase beta chain from Brucella melitensis biotype 2 (strain ATCC 23457).